Consider the following 118-residue polypeptide: Basic phospholipase A2 nigroxin A (118 aa).

Intrachain disulfides connect Cys-11/Cys-70, Cys-25/Cys-117, Cys-27/Cys-43, Cys-42/Cys-98, Cys-49/Cys-91, Cys-59/Cys-84, and Cys-77/Cys-89. The Ca(2+) site is built by Tyr-26, Gly-28, and Gly-30. The active site involves His-46. Residue Asp-47 coordinates Ca(2+). Asp-92 is a catalytic residue.

The protein belongs to the phospholipase A2 family. Group I subfamily. D49 sub-subfamily. It depends on Ca(2+) as a cofactor. Expressed by the venom gland.

The protein resides in the secreted. It catalyses the reaction a 1,2-diacyl-sn-glycero-3-phosphocholine + H2O = a 1-acyl-sn-glycero-3-phosphocholine + a fatty acid + H(+). In terms of biological role, snake venom phospholipase A2 (PLA2) that has only a weak enzymatic activity. It has a myotoxic activity in vivo (dystrophic effect). PLA2 catalyzes the calcium-dependent hydrolysis of the 2-acyl groups in 3-sn-phosphoglycerides. This Micrurus nigrocinctus (Central American coral snake) protein is Basic phospholipase A2 nigroxin A.